Reading from the N-terminus, the 298-residue chain is MFSRASVVGLSACAVQPQWIQVRNMATLKDITRRLKSIKNIQKITKSMKMVAAAKYARAERELKPARVYGTGSLALYEKADIKAPEDKKKHLIIGVSSDRGLCGAIHSSVAKQMKNEVAALTAAGKEVMIVGVGEKIKGILYRTHSDQFLVSFKDVGRKPPTFGDASVIALELLNSGYEFDEGSIIFNQFKSVISYKTEEKPIFSLNTIATAETMSIYDDIDADVLQNYQEYNLANLIYYSLKESTTSEQSARMTAMDNASKNASDMIDKLTLTFNRTRQAVITKELIEIISGAAALD.

The N-terminal 25 residues, 1 to 25 (MFSRASVVGLSACAVQPQWIQVRNM), are a transit peptide targeting the mitochondrion. The residue at position 39 (Lys39) is an N6-acetyllysine. Residue Lys49 is modified to N6-succinyllysine. At Lys55 the chain carries N6-acetyllysine. Lys115 is subject to N6-acetyllysine; alternate. Lys115 carries the N6-succinyllysine; alternate modification. The residue at position 138 (Lys138) is an N6-acetyllysine. Residue Ser146 is modified to Phosphoserine. Lys154 is subject to N6-acetyllysine; alternate. Position 154 is an N6-succinyllysine; alternate (Lys154). An N6-acetyllysine modification is found at Lys197. Lys270 carries the post-translational modification N6-succinyllysine.

It belongs to the ATPase gamma chain family. In terms of assembly, component of the ATP synthase complex composed at least of ATP5F1A/subunit alpha, ATP5F1B/subunit beta, ATP5MC1/subunit c (homooctomer), MT-ATP6/subunit a, MT-ATP8/subunit 8, ATP5ME/subunit e, ATP5MF/subunit f, ATP5MG/subunit g, ATP5MK/subunit k, ATP5MJ/subunit j, ATP5F1C/subunit gamma, ATP5F1D/subunit delta, ATP5F1E/subunit epsilon, ATP5PF/subunit F6, ATP5PB/subunit b, ATP5PD/subunit d, ATP5PO/subunit OSCP. ATP synthase complex consists of a soluble F(1) head domain (subunits alpha(3) and beta(3)) - the catalytic core - and a membrane F(0) domain - the membrane proton channel (subunits c, a, 8, e, f, g, k and j). These two domains are linked by a central stalk (subunits gamma, delta, and epsilon) rotating inside the F1 region and a stationary peripheral stalk (subunits F6, b, d, and OSCP). Interacts with FLVCR2; this interaction occurs in the absence of heme and is disrupted upon heme binding.

It is found in the mitochondrion inner membrane. Subunit gamma, of the mitochondrial membrane ATP synthase complex (F(1)F(0) ATP synthase or Complex V) that produces ATP from ADP in the presence of a proton gradient across the membrane which is generated by electron transport complexes of the respiratory chain. ATP synthase complex consist of a soluble F(1) head domain - the catalytic core - and a membrane F(1) domain - the membrane proton channel. These two domains are linked by a central stalk rotating inside the F(1) region and a stationary peripheral stalk. During catalysis, ATP synthesis in the catalytic domain of F(1) is coupled via a rotary mechanism of the central stalk subunits to proton translocation. In vivo, can only synthesize ATP although its ATP hydrolase activity can be activated artificially in vitro. With the central stalk subunit delta, is essential for the biogenesis of F(1) catalytic part of the ATP synthase complex namely in the formation of F1 assembly intermediate. This chain is ATP synthase F(1) complex subunit gamma, mitochondrial, found in Mus musculus (Mouse).